A 344-amino-acid chain; its full sequence is Phosphate acyltransferase (344 aa).

This sequence belongs to the PlsX family. Homodimer. Probably interacts with PlsY.

It is found in the cytoplasm. It carries out the reaction a fatty acyl-[ACP] + phosphate = an acyl phosphate + holo-[ACP]. It functions in the pathway lipid metabolism; phospholipid metabolism. Catalyzes the reversible formation of acyl-phosphate (acyl-PO(4)) from acyl-[acyl-carrier-protein] (acyl-ACP). This enzyme utilizes acyl-ACP as fatty acyl donor, but not acyl-CoA. The sequence is that of Phosphate acyltransferase from Sodalis glossinidius (strain morsitans).